The chain runs to 202 residues: Small ribosomal subunit protein uS4 (202 aa).

Positions 1 to 13 are enriched in basic residues; that stretch reads MSRYRGPRLRVTR. The tract at residues 1-42 is disordered; that stretch reads MSRYRGPRLRVTRRLGELPGLTRKASKKSNPPGQHGQARRKR. In terms of domain architecture, S4 RNA-binding spans 90 to 152; it reads NRLDNVCFRL…KASKKLVEGN (63 aa).

The protein belongs to the universal ribosomal protein uS4 family. Part of the 30S ribosomal subunit. Contacts protein S5. The interaction surface between S4 and S5 is involved in control of translational fidelity.

In terms of biological role, one of the primary rRNA binding proteins, it binds directly to 16S rRNA where it nucleates assembly of the body of the 30S subunit. With S5 and S12 plays an important role in translational accuracy. The sequence is that of Small ribosomal subunit protein uS4 from Prochlorococcus marinus (strain MIT 9515).